Reading from the N-terminus, the 67-residue chain is Conotoxin TsMMSK-011 (67 aa).

Residues 1-20 form the signal peptide; the sequence is MMSKLGVLLTICLLLFPLTA. Residues 21–50 constitute a propeptide that is removed on maturation; sequence VQLDGDQPADLPALRTQDIATDHSPWFDPV. 3 disulfides stabilise this stretch: Cys53–Cys65, Cys54–Cys61, and Cys58–Cys64. Pro63 carries the 4-hydroxyproline modification.

Belongs to the conotoxin M superfamily. In terms of tissue distribution, expressed by the venom duct.

Its subcellular location is the secreted. This is Conotoxin TsMMSK-011 from Conus tessulatus (Tessellate cone).